The chain runs to 921 residues: Isoleucine--tRNA ligase (921 aa).

A 'HIGH' region motif is present at residues Pro-59–His-69. Glu-569 serves as a coordination point for L-isoleucyl-5'-AMP. Positions Lys-610–Ser-614 match the 'KMSKS' region motif. Lys-613 contacts ATP. Zn(2+)-binding residues include Cys-894, Cys-897, Cys-909, and Cys-912.

The protein belongs to the class-I aminoacyl-tRNA synthetase family. IleS type 1 subfamily. Monomer. Requires Zn(2+) as cofactor.

The protein localises to the cytoplasm. It carries out the reaction tRNA(Ile) + L-isoleucine + ATP = L-isoleucyl-tRNA(Ile) + AMP + diphosphate. In terms of biological role, catalyzes the attachment of isoleucine to tRNA(Ile). As IleRS can inadvertently accommodate and process structurally similar amino acids such as valine, to avoid such errors it has two additional distinct tRNA(Ile)-dependent editing activities. One activity is designated as 'pretransfer' editing and involves the hydrolysis of activated Val-AMP. The other activity is designated 'posttransfer' editing and involves deacylation of mischarged Val-tRNA(Ile). This chain is Isoleucine--tRNA ligase, found in Campylobacter lari (strain RM2100 / D67 / ATCC BAA-1060).